The following is a 191-amino-acid chain: Protein YceI (191 aa).

Residues Met-1 to Ala-22 form the signal peptide.

This sequence belongs to the UPF0312 family. Type 1 subfamily.

The protein localises to the periplasm. This is Protein YceI from Salmonella agona (strain SL483).